The primary structure comprises 200 residues: 3-isopropylmalate dehydratase small subunit (200 aa).

The protein belongs to the LeuD family. LeuD type 1 subfamily. Heterodimer of LeuC and LeuD.

It carries out the reaction (2R,3S)-3-isopropylmalate = (2S)-2-isopropylmalate. The protein operates within amino-acid biosynthesis; L-leucine biosynthesis; L-leucine from 3-methyl-2-oxobutanoate: step 2/4. Catalyzes the isomerization between 2-isopropylmalate and 3-isopropylmalate, via the formation of 2-isopropylmaleate. This chain is 3-isopropylmalate dehydratase small subunit, found in Sodalis glossinidius (strain morsitans).